The following is a 246-amino-acid chain: Exosome complex component SKI6 (246 aa).

The protein belongs to the RNase PH family. In terms of assembly, component of the RNA exosome complex. Specifically part of the catalytically inactive RNA exosome core complex (Exo-9) which may associate with the catalytic subunits RRP6 and DIS3 in cytoplasmic- and nuclear-specific RNA exosome complex forms. Exo-9 is formed by a hexameric base ring of RNase PH domain-containing subunits and a cap ring consisting of CSL4, RRP4 and RRP40.

It localises to the cytoplasm. Its subcellular location is the nucleus. The protein localises to the nucleolus. Its function is as follows. Non-catalytic component of the RNA exosome complex which has 3'-&gt;5' exoribonuclease activity and participates in a multitude of cellular RNA processing and degradation events. In the nucleus, the RNA exosome complex is involved in proper maturation of stable RNA species such as rRNA, snRNA and snoRNA, in the elimination of RNA processing by-products and non-coding 'pervasive' transcripts, such as antisense RNA species and cryptic unstable transcripts (CUTs), and of mRNAs with processing defects, thereby limiting or excluding their export to the cytoplasm. In the cytoplasm, the RNA exosome complex is involved in general mRNA turnover and in RNA surveillance pathways, preventing translation of aberrant mRNAs. The catalytic inactive RNA exosome core complex of 9 subunits (Exo-9) is proposed to play a pivotal role in the binding and presentation of RNA for ribonucleolysis, and to serve as a scaffold for the association with catalytic subunits and accessory proteins or complexes. SKI6 is part of the hexameric ring of RNase PH domain-containing subunits proposed to form a central channel which threads RNA substrates for degradation. The protein is Exosome complex component SKI6 (SKI6) of Saccharomyces cerevisiae (strain ATCC 204508 / S288c) (Baker's yeast).